Consider the following 229-residue polypeptide: Ribonuclease 3 (229 aa).

In terms of domain architecture, RNase III spans 5–127; sequence LSRLERQLGY…LIGAIYLDAG (123 aa). Glu40 contacts Mg(2+). The active site involves Asp44. Positions 113 and 116 each coordinate Mg(2+). Glu116 is an active-site residue. Residues 154 to 224 enclose the DRBM domain; that stretch reads DPKTRLQEFL…AAAALIALGV (71 aa).

It belongs to the ribonuclease III family. In terms of assembly, homodimer. It depends on Mg(2+) as a cofactor.

Its subcellular location is the cytoplasm. The enzyme catalyses Endonucleolytic cleavage to 5'-phosphomonoester.. Digests double-stranded RNA. Involved in the processing of primary rRNA transcript to yield the immediate precursors to the large and small rRNAs (23S and 16S). Processes some mRNAs, and tRNAs when they are encoded in the rRNA operon. Processes pre-crRNA and tracrRNA of type II CRISPR loci if present in the organism. The polypeptide is Ribonuclease 3 (Pseudomonas fluorescens (strain ATCC BAA-477 / NRRL B-23932 / Pf-5)).